The following is a 210-amino-acid chain: Somatotropin-1 (210 aa).

An N-terminal signal peptide occupies residues 1–22 (MGQVFLLMPVLLASCFLSQGAA). Histidine 38 provides a ligand contact to Zn(2+). Cysteine 71 and cysteine 183 form a disulfide bridge. Glutamate 192 serves as a coordination point for Zn(2+). A disulfide bridge connects residues cysteine 200 and cysteine 208.

Belongs to the somatotropin/prolactin family.

Its subcellular location is the secreted. Growth hormone plays an important role in growth control and is involved in the regulation of several anabolic processes. Implicated as an osmoregulatory substance important for seawater adaptation. In Oncorhynchus nerka (Sockeye salmon), this protein is Somatotropin-1 (gh1).